A 515-amino-acid chain; its full sequence is RNA-splicing ligase RtcB homolog (515 aa).

Positions 121, 124, 229, 269, and 363 each coordinate Mn(2+). GMP is bound at residue 228-232; sequence NHYGE. GMP contacts are provided by residues 363–364, 412–415, Ser419, 438–441, and Lys514; these read HN, GGTM, and HGSG. His438 (GMP-histidine intermediate) is an active-site residue.

This sequence belongs to the RtcB family. Catalytic component of the tRNA-splicing ligase complex. Mn(2+) serves as cofactor.

It carries out the reaction a 3'-end 3'-phospho-ribonucleotide-RNA + a 5'-end dephospho-ribonucleoside-RNA + GTP = a ribonucleotidyl-ribonucleotide-RNA + GMP + diphosphate. The enzyme catalyses a 3'-end 2',3'-cyclophospho-ribonucleotide-RNA + a 5'-end dephospho-ribonucleoside-RNA + GTP + H2O = a ribonucleotidyl-ribonucleotide-RNA + GMP + diphosphate + H(+). Catalytic subunit of the tRNA-splicing ligase complex that acts by directly joining spliced tRNA halves to mature-sized tRNAs by incorporating the precursor-derived splice junction phosphate into the mature tRNA as a canonical 3',5'-phosphodiester. May act as an RNA ligase with broad substrate specificity, and may function toward other RNAs. This Theileria annulata protein is RNA-splicing ligase RtcB homolog.